We begin with the raw amino-acid sequence, 477 residues long: Bifunctional protein HldE (477 aa).

Residues 1 to 318 (MKVTLSEFER…ENAVRGRADT (318 aa)) form a ribokinase region. Lysine 179 carries the post-translational modification N6-acetyllysine. An ATP-binding site is contributed by 195 to 198 (NLSE). The active site involves aspartate 264. The cytidylyltransferase stretch occupies residues 344–477 (MTNGVFDILH…IKKIQQDKKG (134 aa)).

In the N-terminal section; belongs to the carbohydrate kinase PfkB family. It in the C-terminal section; belongs to the cytidylyltransferase family. As to quaternary structure, homodimer.

The catalysed reaction is D-glycero-beta-D-manno-heptose 7-phosphate + ATP = D-glycero-beta-D-manno-heptose 1,7-bisphosphate + ADP + H(+). It catalyses the reaction D-glycero-beta-D-manno-heptose 1-phosphate + ATP + H(+) = ADP-D-glycero-beta-D-manno-heptose + diphosphate. The protein operates within nucleotide-sugar biosynthesis; ADP-L-glycero-beta-D-manno-heptose biosynthesis; ADP-L-glycero-beta-D-manno-heptose from D-glycero-beta-D-manno-heptose 7-phosphate: step 1/4. Its pathway is nucleotide-sugar biosynthesis; ADP-L-glycero-beta-D-manno-heptose biosynthesis; ADP-L-glycero-beta-D-manno-heptose from D-glycero-beta-D-manno-heptose 7-phosphate: step 3/4. In terms of biological role, catalyzes the phosphorylation of D-glycero-D-manno-heptose 7-phosphate at the C-1 position to selectively form D-glycero-beta-D-manno-heptose-1,7-bisphosphate. Catalyzes the ADP transfer from ATP to D-glycero-beta-D-manno-heptose 1-phosphate, yielding ADP-D-glycero-beta-D-manno-heptose. The protein is Bifunctional protein HldE of Shigella boydii serotype 18 (strain CDC 3083-94 / BS512).